A 379-amino-acid polypeptide reads, in one-letter code: MYLEKLELKHFRNYEDVNVAFSPQVNVLIGKNAQGKTNLLESIYVLAMARSHRTSNDREMVTFKKDAALIRGEVHQRLGNTKLELLISRKGKKAKVNHLEKARLSQYIGQLNVILFAPEDLALVKGAPSVRRRFIDMEFGQIDALYLHTLTEYRAVLRQRNKYLKELQTKKATDKVYLEILSEQLSESGSQIIFKRLEFLQELEKYADKLHNQITQGKEHLQFQYESTLKEYQGKSVLELKQSLIEQYKTMMDKEIFQGTTLLGPHRDDVRFMLNDKNVQVYGSQGQQRTAALSVKLAEIDLMKEKTHEYPILLLDDVLSELDGARQTHLLKTIQNKVQTFLTTPGLSDVAQQLINKPKIFRIDNGKITEENSFTIEEE.

30-37 (GKNAQGKT) is a binding site for ATP.

Belongs to the RecF family.

Its subcellular location is the cytoplasm. The RecF protein is involved in DNA metabolism; it is required for DNA replication and normal SOS inducibility. RecF binds preferentially to single-stranded, linear DNA. It also seems to bind ATP. In Ligilactobacillus salivarius (strain UCC118) (Lactobacillus salivarius), this protein is DNA replication and repair protein RecF.